The sequence spans 680 residues: Tumor protein 63 (680 aa).

Positions 1–107 are transcription activation; it reads MNFETSRCAT…MQDSDLSDPM (107 aa). Polar residues predominate over residues 123 to 157; the sequence is QIQNGSSSTSPYNTDHAQNSVTAPSPYAQPSSTFD. Residues 123–171 form a disordered region; sequence QIQNGSSSTSPYNTDHAQNSVTAPSPYAQPSSTFDALSPSPAIPSNTDY. Residues 170–362 mediate DNA binding; that stretch reads DYPGPHSFDV…KADEDSIRKQ (193 aa). Zn(2+)-binding residues include Cys-244, His-247, Cys-308, and Cys-312. Basic and acidic residues predominate over residues 351-360; that stretch reads DRKADEDSIR. Disordered stretches follow at residues 351-393 and 435-472; these read DRKA…IKKR and YRQQ…MNSM. Residues 352-388 form an interaction with HIPK2 region; the sequence is RKADEDSIRKQQVSDSTKNGDGTKRPFRQNTHGIQMT. Polar residues-rich tracts occupy residues 361–371 and 379–389; these read KQQVSDSTKNG and RQNTHGIQMTS. The tract at residues 394–443 is oligomerization; it reads RSPDDELLYLPVRGRETYEMLLKIKESLELMQYLPQHTIETYRQQQQQQH. Over residues 437–450 the composition is skewed to low complexity; sequence QQQQQQHQHLLQKQ. The span at 451 to 472 shows a compositional bias: polar residues; the sequence is TSIQSPSSYGNSSPPLNKMNSM. The SAM domain occupies 541–607; sequence PPYPTDCSIV…WKGILDHRQL (67 aa). Residues 610-680 form a transactivation inhibition region; sequence FSSPSHLLRT…KQQRIKEEGE (71 aa). Lys-676 participates in a covalent cross-link: Glycyl lysine isopeptide (Lys-Gly) (interchain with G-Cter in SUMO).

Belongs to the p53 family. In terms of assembly, binds DNA as a homotetramer. Isoform composition of the tetramer may determine transactivation activity. Isoforms Alpha and Gamma interact with HIPK2. Interacts with SSRP1, leading to stimulate coactivator activity. Isoform 1 and isoform 2 interact with WWP1. Interacts with PDS5A. Isoform 5 (via activation domain) interacts with NOC2L. Zn(2+) is required as a cofactor. May be sumoylated. In terms of processing, ubiquitinated. Polyubiquitination involves WWP1 and leads to proteasomal degradation of this protein. In terms of tissue distribution, widely expressed, notably in heart, kidney, placenta, prostate, skeletal muscle, testis and thymus, although the precise isoform varies according to tissue type. Progenitor cell layers of skin, breast, eye and prostate express high levels of DeltaN-type isoforms. Isoform 10 is predominantly expressed in skin squamous cell carcinomas, but not in normal skin tissues.

The protein localises to the nucleus. In terms of biological role, acts as a sequence specific DNA binding transcriptional activator or repressor. The isoforms contain a varying set of transactivation and auto-regulating transactivation inhibiting domains thus showing an isoform specific activity. Isoform 2 activates RIPK4 transcription. May be required in conjunction with TP73/p73 for initiation of p53/TP53 dependent apoptosis in response to genotoxic insults and the presence of activated oncogenes. Involved in Notch signaling by probably inducing JAG1 and JAG2. Plays a role in the regulation of epithelial morphogenesis. The ratio of DeltaN-type and TA*-type isoforms may govern the maintenance of epithelial stem cell compartments and regulate the initiation of epithelial stratification from the undifferentiated embryonal ectoderm. Required for limb formation from the apical ectodermal ridge. Activates transcription of the p21 promoter. The chain is Tumor protein 63 (TP63) from Homo sapiens (Human).